The chain runs to 243 residues: Voltage-gated monoatomic cation channel TMEM109 (243 aa).

A signal peptide spans 1 to 33 (MAASSISSPWGKHVFKAILMVLVALILLHSALA). The Lumenal segment spans residues 34-83 (QSRRDFAPPGQQKREAPVDVLTQIGRSVRGTLDAWIGPETMHLVSESSSQ). A helical membrane pass occupies residues 84–104 (VLWAISSAISVAFFALSGIAA). Residues 105-135 (QLLNALGLAGDYLAQGLKLSPGQVQTFLLWG) lie on the Cytoplasmic side of the membrane. Residues 136-156 (AGALVVYWLLSLLLGLVLALL) traverse the membrane as a helical segment. At 157-185 (GRILWGLKLVIFLAGFVALMRSVPDPSTR) the chain is on the lumenal side. A helical membrane pass occupies residues 186–205 (ALLLLALLILYALLSRLTGS). The Cytoplasmic portion of the chain corresponds to 206–243 (RASGAQLEAKVRGLERQVEELRWRQRRAAKGARSVEEE).

In terms of assembly, homooligomer. Interacts with CRYAB; in the cellular response to DNA damage.

The protein resides in the nucleus outer membrane. Its subcellular location is the endoplasmic reticulum membrane. The protein localises to the sarcoplasmic reticulum membrane. It catalyses the reaction K(+)(in) = K(+)(out). It carries out the reaction Ca(2+)(in) = Ca(2+)(out). In terms of biological role, functions as a voltage-gated monoatomic cation channel permeable to both potassium and calcium. Plays a role in the cellular response to DNA damage. The polypeptide is Voltage-gated monoatomic cation channel TMEM109 (Homo sapiens (Human)).